A 305-amino-acid chain; its full sequence is Coenzyme PQQ synthesis protein B (305 aa).

This sequence belongs to the PqqB family.

It functions in the pathway cofactor biosynthesis; pyrroloquinoline quinone biosynthesis. Functionally, may be involved in the transport of PQQ or its precursor to the periplasm. In Methylobacillus flagellatus (strain ATCC 51484 / DSM 6875 / VKM B-1610 / KT), this protein is Coenzyme PQQ synthesis protein B.